A 219-amino-acid polypeptide reads, in one-letter code: Alpha N-terminal protein methyltransferase 1 (219 aa).

S-adenosyl-L-methionine-binding positions include Gly64, Arg69, 111-112 (LQ), and Gln127.

Belongs to the methyltransferase superfamily. NTM1 family.

It localises to the cytoplasm. It catalyses the reaction N-terminal L-alanyl-L-prolyl-L-lysyl-[protein] + 3 S-adenosyl-L-methionine = N-terminal N,N,N-trimethyl-L-alanyl-L-prolyl-L-lysyl-[protein] + 3 S-adenosyl-L-homocysteine + 3 H(+). The enzyme catalyses N-terminal L-seryl-L-prolyl-L-lysyl-[protein] + 3 S-adenosyl-L-methionine = N-terminal N,N,N-trimethyl-L-seryl-L-prolyl-L-lysyl-[protein] + 3 S-adenosyl-L-homocysteine + 3 H(+). The catalysed reaction is N-terminal L-prolyl-L-prolyl-L-lysyl-[protein] + 2 S-adenosyl-L-methionine = N-terminal N,N-dimethyl-L-prolyl-L-prolyl-L-lysyl-[protein] + 2 S-adenosyl-L-homocysteine + 2 H(+). Alpha-N-methyltransferase that methylates the N-terminus of target proteins containing the N-terminal motif [Ala/Pro/Ser]-Pro-Lys when the initiator Met is cleaved. Specifically catalyzes mono-, di- or tri-methylation of exposed alpha-amino group of Ala or Ser residue in the [Ala/Ser]-Pro-Lys motif and mono- or di-methylation of Pro in the Pro-Pro-Lys motif. The protein is Alpha N-terminal protein methyltransferase 1 (tae1) of Schizosaccharomyces pombe (strain 972 / ATCC 24843) (Fission yeast).